A 1019-amino-acid chain; its full sequence is Photoactivated adenylate cyclase subunit alpha-like protein FB (1019 aa).

Residues 55–148 form the BLUF 1 domain; it reads LRRLMYLSAS…GRLYGEWHMK (94 aa). The 129-residue stretch at 204–332 folds into the Guanylate cyclase 1 domain; the sequence is VVTFIYLVEF…DCINTASRIT (129 aa). One can recognise a BLUF 2 domain in the interval 467–559; sequence LITLTYISQA…REYGSPLDMT (93 aa). The Guanylate cyclase 2 domain occupies 615-744; it reads VLLATDICSF…EVSARVMEVV (130 aa). A compositionally biased stretch (low complexity) spans 825–839; that stretch reads APGRGAPAGGIPSSP. The segment at 825–862 is disordered; sequence APGRGAPAGGIPSSPKVRPPGRTNSVSSYTPDPNEALD. Residues 846–855 show a composition bias toward polar residues; the sequence is RTNSVSSYTP.

This sequence belongs to the adenylyl cyclase class-4/guanylyl cyclase family. In terms of assembly, heterotetramer of two alpha and two beta subunits.

The protein localises to the cell projection. It localises to the cilium. Its subcellular location is the flagellum. This chain is Photoactivated adenylate cyclase subunit alpha-like protein FB, found in Euglena gracilis.